A 406-amino-acid polypeptide reads, in one-letter code: Ribonuclease D (406 aa).

One can recognise a 3'-5' exonuclease domain in the interval 26–193; the sequence is LITQTTDLEI…VYLLLKKQLE (168 aa). Residues 231-312 form the HRDC domain; that stretch reads KPRELAVLQK…HEGLEVDLAT (82 aa).

It belongs to the RNase D family. A divalent metal cation serves as cofactor.

The protein localises to the cytoplasm. It carries out the reaction Exonucleolytic cleavage that removes extra residues from the 3'-terminus of tRNA to produce 5'-mononucleotides.. Its function is as follows. Exonuclease involved in the 3' processing of various precursor tRNAs. Initiates hydrolysis at the 3'-terminus of an RNA molecule and releases 5'-mononucleotides. The sequence is that of Ribonuclease D from Bartonella henselae (strain ATCC 49882 / DSM 28221 / CCUG 30454 / Houston 1) (Rochalimaea henselae).